The sequence spans 427 residues: Glutamate-1-semialdehyde 2,1-aminomutase (427 aa).

Lys-265 is subject to N6-(pyridoxal phosphate)lysine.

Belongs to the class-III pyridoxal-phosphate-dependent aminotransferase family. HemL subfamily. Homodimer. Pyridoxal 5'-phosphate serves as cofactor.

It is found in the cytoplasm. The enzyme catalyses (S)-4-amino-5-oxopentanoate = 5-aminolevulinate. It participates in porphyrin-containing compound metabolism; protoporphyrin-IX biosynthesis; 5-aminolevulinate from L-glutamyl-tRNA(Glu): step 2/2. The chain is Glutamate-1-semialdehyde 2,1-aminomutase from Nitratiruptor sp. (strain SB155-2).